The sequence spans 93 residues: UPF0298 protein LMHCC_0506 (93 aa).

Belongs to the UPF0298 family.

The protein resides in the cytoplasm. The polypeptide is UPF0298 protein LMHCC_0506 (Listeria monocytogenes serotype 4a (strain HCC23)).